The sequence spans 887 residues: Alanine--tRNA ligase (887 aa).

Residues His573, His577, Cys676, and His680 each contribute to the Zn(2+) site.

It belongs to the class-II aminoacyl-tRNA synthetase family. The cofactor is Zn(2+).

It localises to the cytoplasm. The enzyme catalyses tRNA(Ala) + L-alanine + ATP = L-alanyl-tRNA(Ala) + AMP + diphosphate. Its function is as follows. Catalyzes the attachment of alanine to tRNA(Ala) in a two-step reaction: alanine is first activated by ATP to form Ala-AMP and then transferred to the acceptor end of tRNA(Ala). Also edits incorrectly charged Ser-tRNA(Ala) and Gly-tRNA(Ala) via its editing domain. In Corynebacterium jeikeium (strain K411), this protein is Alanine--tRNA ligase.